Consider the following 84-residue polypeptide: Putative membrane protein insertion efficiency factor (84 aa).

This sequence belongs to the UPF0161 family.

The protein localises to the cell inner membrane. Its function is as follows. Could be involved in insertion of integral membrane proteins into the membrane. The sequence is that of Putative membrane protein insertion efficiency factor from Acidiphilium cryptum (strain JF-5).